We begin with the raw amino-acid sequence, 471 residues long: Anthocyanidin 3-O-glucosyltransferase (471 aa).

His24 acts as the Proton acceptor in catalysis. His24 contacts an anthocyanidin. Asp130 functions as the Charge relay in the catalytic mechanism. Thr152 contributes to the UDP-alpha-D-glucose binding site. His161 is an an anthocyanidin binding site. The UDP-alpha-D-glucose site is built by Ala352, Gln354, His369, Trp372, Ser374, and Glu377. An anthocyanidin is bound at residue Gly392. UDP-alpha-D-glucose is bound by residues Asp393 and Gln394.

It belongs to the UDP-glycosyltransferase family.

It carries out the reaction an anthocyanidin + UDP-alpha-D-glucose + H(+) = an anthocyanidin 3-O-beta-D-glucoside + UDP. The protein operates within pigment biosynthesis; anthocyanin biosynthesis. In the presence of other necessary color factors, this glycosylation reaction allows the accumulation of anthocyanin pigments. The protein is Anthocyanidin 3-O-glucosyltransferase (BZ1) of Zea mays (Maize).